Here is a 496-residue protein sequence, read N- to C-terminus: Alanine aminotransferase 1 (496 aa).

An N-acetylalanine modification is found at alanine 2. Threonine 22 is subject to Phosphothreonine. Lysine 314 carries the N6-(pyridoxal phosphate)lysine modification.

It belongs to the class-I pyridoxal-phosphate-dependent aminotransferase family. Alanine aminotransferase subfamily. Homodimer. It depends on pyridoxal 5'-phosphate as a cofactor. In terms of tissue distribution, liver, heart, skeletal muscle, etc.

Its subcellular location is the cytoplasm. The enzyme catalyses L-alanine + 2-oxoglutarate = pyruvate + L-glutamate. It functions in the pathway amino-acid degradation; L-alanine degradation via transaminase pathway; pyruvate from L-alanine: step 1/1. Functionally, catalyzes the reversible transamination between alanine and 2-oxoglutarate to form pyruvate and glutamate. Participates in cellular nitrogen metabolism and also in liver gluconeogenesis starting with precursors transported from skeletal muscles. The chain is Alanine aminotransferase 1 (Gpt) from Rattus norvegicus (Rat).